The sequence spans 120 residues: MARIAGVDLPKNKRIEYALPYVYGIGLTTSRKILDAVGISYDKRVYELTEDEVAAINKHIRENYMVEGDLRRKVAMDIKALMDIGCYRGLRHRRGLPVRGQRTKTNARTRKGKKKTVGAK.

The tract at residues P97–K120 is disordered.

It belongs to the universal ribosomal protein uS13 family. Part of the 30S ribosomal subunit. Forms a loose heterodimer with protein S19. Forms two bridges to the 50S subunit in the 70S ribosome.

Located at the top of the head of the 30S subunit, it contacts several helices of the 16S rRNA. In the 70S ribosome it contacts the 23S rRNA (bridge B1a) and protein L5 of the 50S subunit (bridge B1b), connecting the 2 subunits; these bridges are implicated in subunit movement. Contacts the tRNAs in the A and P-sites. This chain is Small ribosomal subunit protein uS13, found in Nitratiruptor sp. (strain SB155-2).